The sequence spans 602 residues: UvrABC system protein C (602 aa).

The region spanning 17 to 94 is the GIY-YIG domain; that stretch reads KTSGCYKMYS…IKKYKPTYNI (78 aa). Residues 199–234 form the UVR domain; it reads SKLLNDIEIKMKEVIMKENFEAAIKLKETKKSLIEI.

Belongs to the UvrC family. Interacts with UvrB in an incision complex.

Its subcellular location is the cytoplasm. The UvrABC repair system catalyzes the recognition and processing of DNA lesions. UvrC both incises the 5' and 3' sides of the lesion. The N-terminal half is responsible for the 3' incision and the C-terminal half is responsible for the 5' incision. The polypeptide is UvrABC system protein C (Borrelia duttonii (strain Ly)).